We begin with the raw amino-acid sequence, 418 residues long: UDP-N-acetylglucosamine 1-carboxyvinyltransferase (418 aa).

22–23 (KN) serves as a coordination point for phosphoenolpyruvate. Arg92 is a binding site for UDP-N-acetyl-alpha-D-glucosamine. The active-site Proton donor is Cys116. Residue Cys116 is modified to 2-(S-cysteinyl)pyruvic acid O-phosphothioketal. Residues 121–125 (RPIDL), Asp305, and Leu327 each bind UDP-N-acetyl-alpha-D-glucosamine.

This sequence belongs to the EPSP synthase family. MurA subfamily.

It is found in the cytoplasm. The enzyme catalyses phosphoenolpyruvate + UDP-N-acetyl-alpha-D-glucosamine = UDP-N-acetyl-3-O-(1-carboxyvinyl)-alpha-D-glucosamine + phosphate. Its pathway is cell wall biogenesis; peptidoglycan biosynthesis. Cell wall formation. Adds enolpyruvyl to UDP-N-acetylglucosamine. The protein is UDP-N-acetylglucosamine 1-carboxyvinyltransferase of Campylobacter lari (strain RM2100 / D67 / ATCC BAA-1060).